Here is a 397-residue protein sequence, read N- to C-terminus: Phosphoglycerate kinase (397 aa).

Substrate is bound by residues 21-23 (DFN), Arg37, 60-63 (HLGR), Arg119, and Arg152. ATP is bound by residues Lys203, Gly294, Glu325, and 354–357 (GGDS).

Belongs to the phosphoglycerate kinase family. In terms of assembly, monomer.

It localises to the cytoplasm. The enzyme catalyses (2R)-3-phosphoglycerate + ATP = (2R)-3-phospho-glyceroyl phosphate + ADP. The protein operates within carbohydrate degradation; glycolysis; pyruvate from D-glyceraldehyde 3-phosphate: step 2/5. The polypeptide is Phosphoglycerate kinase (Chlorobaculum tepidum (strain ATCC 49652 / DSM 12025 / NBRC 103806 / TLS) (Chlorobium tepidum)).